The sequence spans 201 residues: Holliday junction resolvase RecU (201 aa).

Mg(2+) contacts are provided by Thr-85, Asp-87, Glu-100, and Gln-119.

This sequence belongs to the RecU family. Mg(2+) serves as cofactor.

It localises to the cytoplasm. The catalysed reaction is Endonucleolytic cleavage at a junction such as a reciprocal single-stranded crossover between two homologous DNA duplexes (Holliday junction).. In terms of biological role, endonuclease that resolves Holliday junction intermediates in genetic recombination. Cleaves mobile four-strand junctions by introducing symmetrical nicks in paired strands. Promotes annealing of linear ssDNA with homologous dsDNA. Required for DNA repair, homologous recombination and chromosome segregation. This chain is Holliday junction resolvase RecU, found in Geobacillus sp. (strain WCH70).